The chain runs to 562 residues: Glucocorticoid modulatory element-binding protein 1 (562 aa).

N-acetylalanine is present on A2. Residues A72–D156 form the SAND domain. Residue C103 coordinates Zn(2+). DNA-binding residues include K129, K133, K136, and R147. Zn(2+) contacts are provided by H160, C164, and C168. Residues L311–V357 are a coiled coil. Positions P360 to S384 are disordered. Over residues P375–S384 the composition is skewed to polar residues.

Homodimer, and heterodimer of GMEB1 and GMEB2. Interacts with the glucocorticoid receptor (NR3C1) and NCOA2/TIF2. May interact with HSP27 and CREB-binding protein (CBP). Interacts with TRIM63.

It is found in the nucleus. The protein localises to the cytoplasm. Its function is as follows. Trans-acting factor that binds to glucocorticoid modulatory elements (GME) present in the TAT (tyrosine aminotransferase) promoter and increases sensitivity to low concentrations of glucocorticoids. Also binds to the transferrin receptor promoter. This is Glucocorticoid modulatory element-binding protein 1 (Gmeb1) from Rattus norvegicus (Rat).